The sequence spans 397 residues: Elongation factor Tu (397 aa).

In terms of domain architecture, tr-type G spans Lys10 to Glu206. The interval Gly19–Thr26 is G1. Residue Gly19–Thr26 coordinates GTP. A Mg(2+)-binding site is contributed by Thr26. Residues Gly62–Ser66 are G2. A G3 region spans residues Asp83–Gly86. GTP contacts are provided by residues Asp83–His87 and Asn138–Asp141. A G4 region spans residues Asn138–Asp141. Residues Ser176–Leu178 form a G5 region.

The protein belongs to the TRAFAC class translation factor GTPase superfamily. Classic translation factor GTPase family. EF-Tu/EF-1A subfamily. Monomer.

It localises to the cytoplasm. It carries out the reaction GTP + H2O = GDP + phosphate + H(+). Functionally, GTP hydrolase that promotes the GTP-dependent binding of aminoacyl-tRNA to the A-site of ribosomes during protein biosynthesis. This is Elongation factor Tu from Kineococcus radiotolerans (strain ATCC BAA-149 / DSM 14245 / SRS30216).